Consider the following 304-residue polypeptide: Acetaldehyde dehydrogenase (304 aa).

The Acyl-thioester intermediate role is filled by Cys-131. Residues 162–170 and Asn-273 contribute to the NAD(+) site; that span reads SAGPGTRKN.

Belongs to the acetaldehyde dehydrogenase family.

It catalyses the reaction acetaldehyde + NAD(+) + CoA = acetyl-CoA + NADH + H(+). The polypeptide is Acetaldehyde dehydrogenase (Polaromonas naphthalenivorans (strain CJ2)).